The following is an 86-amino-acid chain: Small ribosomal subunit protein uS17 (86 aa).

It belongs to the universal ribosomal protein uS17 family. In terms of assembly, part of the 30S ribosomal subunit.

Functionally, one of the primary rRNA binding proteins, it binds specifically to the 5'-end of 16S ribosomal RNA. In Bifidobacterium longum (strain DJO10A), this protein is Small ribosomal subunit protein uS17.